The sequence spans 473 residues: Cephalotoxin-like protein (473 aa).

A signal peptide spans 1-21 (RWLGWQKFCWISCLFSSISSG). Coiled coils occupy residues 40–60 (AINA…EALK) and 116–147 (LINE…ADTA).

As to expression, component of the acid-insoluble and acid-soluble organic matrix of the aragonitic skeleton (at protein level).

It is found in the secreted. The polypeptide is Cephalotoxin-like protein (Acropora millepora (Staghorn coral)).